The following is a 441-amino-acid chain: tRNA-2-methylthio-N(6)-dimethylallyladenosine synthase (441 aa).

Residues 2-117 enclose the MTTase N-terminal domain; that stretch reads KGLYIKSYGC…LPELLVKAHR (116 aa). Residues Cys-11, Cys-47, Cys-80, Cys-157, Cys-161, and Cys-164 each coordinate [4Fe-4S] cluster. In terms of domain architecture, Radical SAM core spans 143–374; that stretch reads KNQETSAFIS…QKLLREQQLA (232 aa).

The protein belongs to the methylthiotransferase family. MiaB subfamily. As to quaternary structure, monomer. [4Fe-4S] cluster is required as a cofactor.

It is found in the cytoplasm. It catalyses the reaction N(6)-dimethylallyladenosine(37) in tRNA + (sulfur carrier)-SH + AH2 + 2 S-adenosyl-L-methionine = 2-methylsulfanyl-N(6)-dimethylallyladenosine(37) in tRNA + (sulfur carrier)-H + 5'-deoxyadenosine + L-methionine + A + S-adenosyl-L-homocysteine + 2 H(+). Its function is as follows. Catalyzes the methylthiolation of N6-(dimethylallyl)adenosine (i(6)A), leading to the formation of 2-methylthio-N6-(dimethylallyl)adenosine (ms(2)i(6)A) at position 37 in tRNAs that read codons beginning with uridine. This Ehrlichia canis (strain Jake) protein is tRNA-2-methylthio-N(6)-dimethylallyladenosine synthase.